We begin with the raw amino-acid sequence, 286 residues long: Bifunctional protein FolD (286 aa).

NADP(+) contacts are provided by residues G168–G170, T195, and V236.

Belongs to the tetrahydrofolate dehydrogenase/cyclohydrolase family. As to quaternary structure, homodimer.

It catalyses the reaction (6R)-5,10-methylene-5,6,7,8-tetrahydrofolate + NADP(+) = (6R)-5,10-methenyltetrahydrofolate + NADPH. The catalysed reaction is (6R)-5,10-methenyltetrahydrofolate + H2O = (6R)-10-formyltetrahydrofolate + H(+). It functions in the pathway one-carbon metabolism; tetrahydrofolate interconversion. Functionally, catalyzes the oxidation of 5,10-methylenetetrahydrofolate to 5,10-methenyltetrahydrofolate and then the hydrolysis of 5,10-methenyltetrahydrofolate to 10-formyltetrahydrofolate. This is Bifunctional protein FolD from Mycolicibacterium fortuitum (Mycobacterium fortuitum).